The sequence spans 199 residues: Protein OPI10 homolog (199 aa).

The protein belongs to the OPI10 family.

This Aedes aegypti (Yellowfever mosquito) protein is Protein OPI10 homolog.